Consider the following 1333-residue polypeptide: DNA-directed RNA polymerase subunit beta' (1333 aa).

Zn(2+) is bound by residues Cys-60, Cys-62, Cys-75, and Cys-78. The Mg(2+) site is built by Asp-535, Asp-537, and Asp-539. The Zn(2+) site is built by Cys-901, Cys-983, Cys-990, and Cys-993.

Belongs to the RNA polymerase beta' chain family. As to quaternary structure, the RNAP catalytic core consists of 2 alpha, 1 beta, 1 beta' and 1 omega subunit. When a sigma factor is associated with the core the holoenzyme is formed, which can initiate transcription. Mg(2+) is required as a cofactor. Zn(2+) serves as cofactor.

It carries out the reaction RNA(n) + a ribonucleoside 5'-triphosphate = RNA(n+1) + diphosphate. In terms of biological role, DNA-dependent RNA polymerase catalyzes the transcription of DNA into RNA using the four ribonucleoside triphosphates as substrates. The polypeptide is DNA-directed RNA polymerase subunit beta' (Corynebacterium efficiens (strain DSM 44549 / YS-314 / AJ 12310 / JCM 11189 / NBRC 100395)).